We begin with the raw amino-acid sequence, 874 residues long: Probable inorganic carbon transporter subunit DabA (874 aa).

Residues Cys-398, Asp-400, His-580, and Cys-595 each contribute to the Zn(2+) site.

This sequence belongs to the inorganic carbon transporter (TC 9.A.2) DabA family. Forms a complex with DabB. The cofactor is Zn(2+).

The protein localises to the cell membrane. Part of an energy-coupled inorganic carbon pump. In Bacillus cereus (strain ZK / E33L), this protein is Probable inorganic carbon transporter subunit DabA.